The sequence spans 215 residues: Probable phosphoglycerate mutase GpmB (215 aa).

Substrate contacts are provided by residues 8 to 15 (RHGETQWN), 21 to 22 (QG), arginine 58, 82 to 85 (ELDM), 104 to 105 (RR), and 151 to 152 (GM). Histidine 9 functions as the Tele-phosphohistidine intermediate in the catalytic mechanism. Catalysis depends on glutamate 82, which acts as the Proton donor/acceptor.

Belongs to the phosphoglycerate mutase family. GpmB subfamily.

It catalyses the reaction (2R)-2-phosphoglycerate = (2R)-3-phosphoglycerate. The protein operates within carbohydrate degradation; glycolysis; pyruvate from D-glyceraldehyde 3-phosphate: step 3/5. This is Probable phosphoglycerate mutase GpmB from Cronobacter sakazakii (strain ATCC BAA-894) (Enterobacter sakazakii).